The sequence spans 88 residues: Small ribosomal subunit protein uS17 (88 aa).

It belongs to the universal ribosomal protein uS17 family. Part of the 30S ribosomal subunit.

In terms of biological role, one of the primary rRNA binding proteins, it binds specifically to the 5'-end of 16S ribosomal RNA. The sequence is that of Small ribosomal subunit protein uS17 from Saccharophagus degradans (strain 2-40 / ATCC 43961 / DSM 17024).